Here is a 306-residue protein sequence, read N- to C-terminus: Probable L,D-transpeptidase YbiS (306 aa).

The N-terminal stretch at 1–24 (MNMKLKTLFAAAFAVVGFCSTASA) is a signal peptide. Residues 99–234 (EGIVINSAEM…VPVGTRVQFI (136 aa)) form the L,D-TPase catalytic domain. The Proton donor/acceptor role is filled by His-194. The active-site Nucleophile is the Cys-210.

Belongs to the YkuD family.

Its subcellular location is the periplasm. The protein operates within cell wall biogenesis; peptidoglycan biosynthesis. Functionally, responsible, at least in part, for anchoring of the major outer membrane lipoprotein (Lpp) to the peptidoglycan via a meso-diaminopimelyl-L-Lys- bond on the terminal residue of Lpp. This is Probable L,D-transpeptidase YbiS (ybiS) from Escherichia coli O6:H1 (strain CFT073 / ATCC 700928 / UPEC).